The chain runs to 81 residues: ATP synthase subunit c (81 aa).

2 helical membrane-spanning segments follow: residues 6-26 and 57-77; these read AAAS…GPGI and LAFM…LLFA.

The protein belongs to the ATPase C chain family. F-type ATPases have 2 components, F(1) - the catalytic core - and F(0) - the membrane proton channel. F(1) has five subunits: alpha(3), beta(3), gamma(1), delta(1), epsilon(1). F(0) has four main subunits: a(1), b(1), b'(1) and c(10-14). The alpha and beta chains form an alternating ring which encloses part of the gamma chain. F(1) is attached to F(0) by a central stalk formed by the gamma and epsilon chains, while a peripheral stalk is formed by the delta, b and b' chains.

It localises to the cellular thylakoid membrane. Functionally, f(1)F(0) ATP synthase produces ATP from ADP in the presence of a proton or sodium gradient. F-type ATPases consist of two structural domains, F(1) containing the extramembraneous catalytic core and F(0) containing the membrane proton channel, linked together by a central stalk and a peripheral stalk. During catalysis, ATP synthesis in the catalytic domain of F(1) is coupled via a rotary mechanism of the central stalk subunits to proton translocation. Key component of the F(0) channel; it plays a direct role in translocation across the membrane. A homomeric c-ring of between 10-14 subunits forms the central stalk rotor element with the F(1) delta and epsilon subunits. The chain is ATP synthase subunit c from Synechocystis sp. (strain ATCC 27184 / PCC 6803 / Kazusa).